The primary structure comprises 330 residues: Aspartate--ammonia ligase (330 aa).

It belongs to the class-II aminoacyl-tRNA synthetase family. AsnA subfamily.

The protein localises to the cytoplasm. It catalyses the reaction L-aspartate + NH4(+) + ATP = L-asparagine + AMP + diphosphate + H(+). It functions in the pathway amino-acid biosynthesis; L-asparagine biosynthesis; L-asparagine from L-aspartate (ammonia route): step 1/1. The protein is Aspartate--ammonia ligase of Escherichia coli O45:K1 (strain S88 / ExPEC).